Here is a 717-residue protein sequence, read N- to C-terminus: Cleavage stimulation factor subunit 3 (717 aa).

Ser-2 is modified (N-acetylserine). HAT repeat units follow at residues 45–77 (QPID…AEIK), 79–110 (KNYD…YVRE), 117–152 (SYKE…FLKG), 163–196 (QRIT…YEEG), 221–261 (KEYE…WEKS), 271–303 (LITK…YLEQ), 319–352 (LFSD…YEES), 354–387 (MKYE…FARR), and 458–494 (NEDN…FESN). Residues 684 to 705 (VKRPNEDSDEDEEKGAVVPPVH) form a disordered region. Ser-691 carries the post-translational modification Phosphoserine.

Homodimer. The CSTF complex is composed of CSTF1 (50 kDa subunit), CSTF2 (64 kDa subunit) and CSTF3 (77 kDa subunit). CSTF3 directly interacts with CSTF1 and CSTF2. Interacts with FIP1L1.

The protein resides in the nucleus. Its function is as follows. One of the multiple factors required for polyadenylation and 3'-end cleavage of mammalian pre-mRNAs. The polypeptide is Cleavage stimulation factor subunit 3 (CSTF3) (Pongo abelii (Sumatran orangutan)).